The following is a 385-amino-acid chain: MKNITILGATGSIGTQTLDVIRKGNEELKLVAISANKSYKKVIEIIKEFKPKYAVLMEENAFKIVEDFCVDSKIDTKVLKGMEGMIYISTLEEINTVVTSVVGMIGLVPTIKAIESGKDIALANKETLVVAGELVISKAKEHNVNILPVDSEHGAIFQCLRGNKKEEVKNIIVTASGGPFRGKKKEELIDVKPEHALKHPKWNMGRKISIDSATLMNKGLEVIEAHFLFGVDYENIKVVVHPQSIVHSMVEYKDGSVIAQMATPDMKLPIQYALNYPNRKESQIEPLDFYKISNLTFEKPDMDTFLPLKLAYEAGKKGGVMPAILNGANEVAVDLFLKGKIEFLQIGDLLQECMNKFYKSMEATLENVISVDKEVREYLGKKYDI.

NADPH is bound by residues Thr10, Gly11, Ser12, Ile13, Lys37, and Asn124. Lys125 lines the 1-deoxy-D-xylulose 5-phosphate pocket. Glu126 serves as a coordination point for NADPH. Residue Asp150 coordinates Mn(2+). 4 residues coordinate 1-deoxy-D-xylulose 5-phosphate: Ser151, Glu152, Ser176, and His199. Glu152 lines the Mn(2+) pocket. Residue Gly205 participates in NADPH binding. Ser212, Asn217, Lys218, and Glu221 together coordinate 1-deoxy-D-xylulose 5-phosphate. Glu221 contacts Mn(2+).

Belongs to the DXR family. Mg(2+) serves as cofactor. It depends on Mn(2+) as a cofactor.

It catalyses the reaction 2-C-methyl-D-erythritol 4-phosphate + NADP(+) = 1-deoxy-D-xylulose 5-phosphate + NADPH + H(+). The protein operates within isoprenoid biosynthesis; isopentenyl diphosphate biosynthesis via DXP pathway; isopentenyl diphosphate from 1-deoxy-D-xylulose 5-phosphate: step 1/6. In terms of biological role, catalyzes the NADPH-dependent rearrangement and reduction of 1-deoxy-D-xylulose-5-phosphate (DXP) to 2-C-methyl-D-erythritol 4-phosphate (MEP). The sequence is that of 1-deoxy-D-xylulose 5-phosphate reductoisomerase from Clostridium botulinum (strain Loch Maree / Type A3).